Here is a 1260-residue protein sequence, read N- to C-terminus: Kinesin-like protein KIN-14E (1260 aa).

The 160-residue stretch at 115–274 folds into the MyTH4 domain; sequence FQKDPIPTSL…PGREEIEALL (160 aa). The FERM domain maps to 279-593; it reads LTTIVFFLDE…HINDVMLRRY (315 aa). 2 coiled-coil regions span residues 615-676 and 753-853; these read QNFE…LLEV and SKRL…TAAI. The 322-residue stretch at 888 to 1209 folds into the Kinesin motor domain; sequence KIRVYCRIRP…LLYASRVRTI (322 aa). Residue 972–977 coordinates ATP; the sequence is GSGKTF. The interval 1217–1239 is calmodulin-binding; that stretch reads ISSKEMVRLKKLVAYWKEQAGKK. The homodimerization domain stretch occupies residues 1221–1260; the sequence is EMVRLKKLVAYWKEQAGKKGEEEDLVDIEEDRTRKDEADS. The tract at residues 1236 to 1260 is disordered; sequence AGKKGEEEDLVDIEEDRTRKDEADS. The span at 1251–1260 shows a compositional bias: basic and acidic residues; sequence DRTRKDEADS.

The protein belongs to the TRAFAC class myosin-kinesin ATPase superfamily. Kinesin family. KIN-14 subfamily. As to quaternary structure, homodimer (via C-terminus). Binds microtubules via its N-terminus containing the MyTH4 domain and binds F-actin via its FERM domain. Interacts with KIPK1. Interacts with KIPK2. Interacts with AN. Interacts with AIR9. Interacts (via C-terminus) with KIC, CAM2, CAM4 and CAM6. KIC and calmodulin show competitive binding to KCBP. Binding to calmodulin inhibits microtubule binding activity. Binding to KIC inhibits microtubule binding activity and microtubule-stimulated ATPase activity. As to expression, widely expressed with the highest levels in flowers. Strongly expressed in the root tip. Highly detected in the branch apex of the trichome.

It localises to the cytoplasm. The protein resides in the cell cortex. Its subcellular location is the cytoskeleton. The protein localises to the spindle. It is found in the phragmoplast. Its function is as follows. Minus-end microtubule-dependent motor protein involved in the regulation of cell division and trichome morphogenesis through microtubules bundling. Possesses basal and microtubule-stimulated ATPase activities. Acts as a hub that brings together microtubules and actin filaments to modulate the cytoskeleton during trichome formation and morphogenesis. Could be involved in the negative regulation of root growth. The polypeptide is Kinesin-like protein KIN-14E (Arabidopsis thaliana (Mouse-ear cress)).